A 740-amino-acid polypeptide reads, in one-letter code: MEQTYEYAWIIPFIPLPVPMLIGAGLILFPTATKSFRRMWAFQSVLLLSIVMIFSIYLSIQQINSSSVYQYVWSWIINNDFSLDFGYLIDPLTSIMSILITTVGIMVLIYSDNYMAHDQGYLRFFAYMSFFSTSMLGLVTSSNLIQIYIFWELVGLCSYLLIGFWFTRPVAANACQKAFVTNRVGDFGLLLGILGFYWITGSFEFRDLFEIFNNLIYNNEVNFLFVTLCAVLLFAGAVSKSAQFPLHVWLPDAMEGPTPISALIHAATMVAAGIFLVARLLPLFRVIPYIMYLISVIGIITVLLGATLALAQKDIKRGLAYSTMSQLGYMMLALGMGSYRSALFHLITHAYSKALLFLGSGSIIHSMETIVGYSPAKSQNMGLMGGLRKHVPITKITFLLGTLSLCGIPPLACFWSKDEILNDSWLYSPIFAIIAWATAGLTAFYMFRIYLLTFEGHLNVHFQNYGGKHKTPFYSISLWGKNGVKKNSCLLTMNNNESTYFLSKTKYPIDKNGRKMTRPFMTIAHFEHKAVSSYPYESDNTMLFPIFVLGLFTLFVGAIGIPFNQEGVNLDILSKWLAPSINLLHPKSNNSQDWNEFLKDAVVSVSIAYFGIFIASFLYKPVYSSLKNLEFINSFVKKGPKRILWDKIINGIYDWSYNRAYIDAFYTRFFVGGIRGLAEFTHFFDRRVIDGMTNGVGVISFIVGEGIKYIGGGRISSYLFLYLAYVSVFLLVYYLLFSTF.

Transmembrane regions (helical) follow at residues 9 to 29, 40 to 60, 89 to 109, 125 to 145, 147 to 167, 185 to 205, 219 to 239, 258 to 278, 286 to 306, 327 to 347, 354 to 374, 396 to 416, 425 to 445, 543 to 563, 602 to 622, and 717 to 737; these read WIIP…LILF, WAFQ…YLSI, IDPL…MVLI, FAYM…SNLI, IYIF…FWFT, GDFG…SFEF, NEVN…GAVS, TPIS…FLVA, VIPY…LLGA, LGYM…FHLI, ALLF…VGYS, ITFL…CFWS, WLYS…TAFY, LFPI…GIPF, VVSV…YKPV, and SYLF…YLLF.

The protein belongs to the complex I subunit 5 family. As to quaternary structure, NDH is composed of at least 16 different subunits, 5 of which are encoded in the nucleus.

The protein localises to the plastid. The protein resides in the chloroplast thylakoid membrane. The enzyme catalyses a plastoquinone + NADH + (n+1) H(+)(in) = a plastoquinol + NAD(+) + n H(+)(out). It catalyses the reaction a plastoquinone + NADPH + (n+1) H(+)(in) = a plastoquinol + NADP(+) + n H(+)(out). Its function is as follows. NDH shuttles electrons from NAD(P)H:plastoquinone, via FMN and iron-sulfur (Fe-S) centers, to quinones in the photosynthetic chain and possibly in a chloroplast respiratory chain. The immediate electron acceptor for the enzyme in this species is believed to be plastoquinone. Couples the redox reaction to proton translocation, and thus conserves the redox energy in a proton gradient. The chain is NAD(P)H-quinone oxidoreductase subunit 5, chloroplastic (ndhF) from Solanum bulbocastanum (Wild potato).